Consider the following 98-residue polypeptide: Integration host factor subunit alpha (98 aa).

Belongs to the bacterial histone-like protein family. Heterodimer of an alpha and a beta chain.

Functionally, this protein is one of the two subunits of integration host factor, a specific DNA-binding protein that functions in genetic recombination as well as in transcriptional and translational control. The chain is Integration host factor subunit alpha from Mannheimia succiniciproducens (strain KCTC 0769BP / MBEL55E).